Consider the following 181-residue polypeptide: Nucleoside triphosphate/diphosphate phosphatase (181 aa).

Residue arginine 26 is the Proton donor of the active site. Positions 90, 106, 108, 110, 123, and 126 each coordinate Mg(2+).

It belongs to the Ntdp family. Requires Mg(2+) as cofactor.

It carries out the reaction a ribonucleoside 5'-triphosphate + H2O = a ribonucleoside 5'-diphosphate + phosphate + H(+). It catalyses the reaction a ribonucleoside 5'-diphosphate + H2O = a ribonucleoside 5'-phosphate + phosphate + H(+). Its function is as follows. Has nucleoside phosphatase activity towards nucleoside triphosphates and nucleoside diphosphates. This is Nucleoside triphosphate/diphosphate phosphatase from Staphylococcus carnosus (strain TM300).